Here is a 215-residue protein sequence, read N- to C-terminus: Pyrrolidone-carboxylate peptidase (215 aa).

Active-site residues include Glu80, Cys143, and His167.

It belongs to the peptidase C15 family. In terms of assembly, homotetramer.

It is found in the cytoplasm. The catalysed reaction is Release of an N-terminal pyroglutamyl group from a polypeptide, the second amino acid generally not being Pro.. Removes 5-oxoproline from various penultimate amino acid residues except L-proline. This is Pyrrolidone-carboxylate peptidase from Bacillus cereus (strain Q1).